The sequence spans 131 residues: ATP synthase epsilon chain (131 aa).

The protein belongs to the ATPase epsilon chain family. As to quaternary structure, F-type ATPases have 2 components, CF(1) - the catalytic core - and CF(0) - the membrane proton channel. CF(1) has five subunits: alpha(3), beta(3), gamma(1), delta(1), epsilon(1). CF(0) has three main subunits: a, b and c.

Its subcellular location is the cell membrane. Its function is as follows. Produces ATP from ADP in the presence of a proton gradient across the membrane. The protein is ATP synthase epsilon chain of Clostridium novyi (strain NT).